The sequence spans 420 residues: E3 ubiquitin-protein ligase pellino homolog 2 (420 aa).

Residues 15–202 enclose the FHA; atypical domain; that stretch reads EPVKYGELVV…MHPRGGFTEE (188 aa).

The protein belongs to the pellino family. Interacts with TRAF6, IRAK1, IRAK4 and MAP3K7. Interacts with BCL10; this interaction is impaired by SOCS3. Post-translationally, phosphorylated by IRAK1 and IRAK4 enhancing its E3 ligase activity.

The enzyme catalyses S-ubiquitinyl-[E2 ubiquitin-conjugating enzyme]-L-cysteine + [acceptor protein]-L-lysine = [E2 ubiquitin-conjugating enzyme]-L-cysteine + N(6)-ubiquitinyl-[acceptor protein]-L-lysine.. It participates in protein modification; protein ubiquitination. Its function is as follows. E3 ubiquitin ligase catalyzing the covalent attachment of ubiquitin moieties onto substrate proteins. Involved in the TLR and IL-1 signaling pathways via interaction with the complex containing IRAK kinases and TRAF6. Mediates IL1B-induced IRAK1 'Lys-63'-linked polyubiquitination and possibly 'Lys-48'-linked ubiquitination. May be important for LPS- and IL1B-induced MAP3K7-dependent, but not MAP3K3-dependent, NF-kappa-B activation. Can activate the MAP (mitogen activated protein) kinase pathway leading to activation of ELK1. This is E3 ubiquitin-protein ligase pellino homolog 2 (PELI2) from Homo sapiens (Human).